The chain runs to 311 residues: Aspartate carbamoyltransferase catalytic subunit (311 aa).

Residues R58 and T59 each contribute to the carbamoyl phosphate site. Position 86 (K86) interacts with L-aspartate. 3 residues coordinate carbamoyl phosphate: R108, H136, and Q139. L-aspartate is bound by residues R169 and R223. 2 residues coordinate carbamoyl phosphate: G264 and P265.

This sequence belongs to the aspartate/ornithine carbamoyltransferase superfamily. ATCase family. Heterododecamer (2C3:3R2) of six catalytic PyrB chains organized as two trimers (C3), and six regulatory PyrI chains organized as three dimers (R2).

The enzyme catalyses carbamoyl phosphate + L-aspartate = N-carbamoyl-L-aspartate + phosphate + H(+). It participates in pyrimidine metabolism; UMP biosynthesis via de novo pathway; (S)-dihydroorotate from bicarbonate: step 2/3. Catalyzes the condensation of carbamoyl phosphate and aspartate to form carbamoyl aspartate and inorganic phosphate, the committed step in the de novo pyrimidine nucleotide biosynthesis pathway. The protein is Aspartate carbamoyltransferase catalytic subunit of Acidiphilium cryptum (strain JF-5).